Reading from the N-terminus, the 207-residue chain is Dephospho-CoA kinase (207 aa).

In terms of domain architecture, DPCK spans 10 to 207; it reads ILGLTGGIGS…FYLTLKGGQP (198 aa). 18-23 provides a ligand contact to ATP; sequence GSGKSA.

Belongs to the CoaE family.

Its subcellular location is the cytoplasm. The catalysed reaction is 3'-dephospho-CoA + ATP = ADP + CoA + H(+). It functions in the pathway cofactor biosynthesis; coenzyme A biosynthesis; CoA from (R)-pantothenate: step 5/5. Catalyzes the phosphorylation of the 3'-hydroxyl group of dephosphocoenzyme A to form coenzyme A. The protein is Dephospho-CoA kinase of Pseudomonas putida (strain ATCC 47054 / DSM 6125 / CFBP 8728 / NCIMB 11950 / KT2440).